The sequence spans 313 residues: uncharacterized protein (313 aa).

6 helical membrane passes run 16 to 36, 106 to 126, 155 to 175, 208 to 228, 233 to 253, and 286 to 306; these read AGTWVMIGILGLTMVGFAFLA, FTILTGLFTIIIAAGIVANEF, FGLLLLLILFIGSTLLGLIFF, LSESVSALMVATMAFMLSAVF, LAVGFSIFLLVAGTTATAFIA, and FSLVMLAIYFIIFLLLAFGIF.

It localises to the cell membrane. This is an uncharacterized protein from Bacillus subtilis (strain 168).